A 229-amino-acid chain; its full sequence is DNA mismatch repair protein MutH (229 aa).

Belongs to the MutH family.

It is found in the cytoplasm. Functionally, sequence-specific endonuclease that cleaves unmethylated GATC sequences. It is involved in DNA mismatch repair. The sequence is that of DNA mismatch repair protein MutH from Shigella flexneri.